Consider the following 201-residue polypeptide: Recombination protein RecR (201 aa).

The C4-type zinc-finger motif lies at 59–74 (CEICGNMDTENICRIC). One can recognise a Toprim domain in the interval 82–177 (SIIAIVETVA…KISRLASGIP (96 aa)).

The protein belongs to the RecR family.

Its function is as follows. May play a role in DNA repair. It seems to be involved in an RecBC-independent recombinational process of DNA repair. It may act with RecF and RecO. This is Recombination protein RecR from Rickettsia peacockii (strain Rustic).